Here is a 209-residue protein sequence, read N- to C-terminus: Protein Sxy (209 aa).

This sequence belongs to the Sxy/TfoX family.

Functionally, induces low levels of natural DNA uptake by inducing transcription of the competence genes (the CRP-S regulon) required for DNA transformation. Induction of the CRP-S regulon also requires Sxy-activated promoter (CRP-S), cAMP receptor protein (CRP) and cAMP. Induces CRP-S site-containing genes which are involved in genome maintenance and transcription or encoding transposases and toxin-antitoxin pairs. In Escherichia coli (strain K12), this protein is Protein Sxy.